A 408-amino-acid chain; its full sequence is LL-diaminopimelate aminotransferase (408 aa).

Substrate-binding residues include tyrosine 15 and glycine 42. Residues tyrosine 72, 108–109 (SK), tyrosine 132, asparagine 187, tyrosine 218, and 246–248 (SFS) contribute to the pyridoxal 5'-phosphate site. Lysine 109, tyrosine 132, and asparagine 187 together coordinate substrate. Position 249 is an N6-(pyridoxal phosphate)lysine (lysine 249). Pyridoxal 5'-phosphate contacts are provided by arginine 257 and asparagine 291. Residues asparagine 291 and arginine 387 each contribute to the substrate site.

It belongs to the class-I pyridoxal-phosphate-dependent aminotransferase family. LL-diaminopimelate aminotransferase subfamily. In terms of assembly, homodimer. The cofactor is pyridoxal 5'-phosphate.

It catalyses the reaction (2S,6S)-2,6-diaminopimelate + 2-oxoglutarate = (S)-2,3,4,5-tetrahydrodipicolinate + L-glutamate + H2O + H(+). Its pathway is amino-acid biosynthesis; L-lysine biosynthesis via DAP pathway; LL-2,6-diaminopimelate from (S)-tetrahydrodipicolinate (aminotransferase route): step 1/1. In terms of biological role, involved in the synthesis of meso-diaminopimelate (m-DAP or DL-DAP), required for both lysine and peptidoglycan biosynthesis. Catalyzes the direct conversion of tetrahydrodipicolinate to LL-diaminopimelate. The chain is LL-diaminopimelate aminotransferase from Prochlorococcus marinus (strain NATL1A).